The following is a 30-amino-acid chain: Truncated interleukin-1-binding protein (30 aa).

Positions 1–18 are cleaved as a signal peptide; that stretch reads MSILPVIFLPIFFYSSFV.

It belongs to the interleukin-1 receptor family.

The polypeptide is Truncated interleukin-1-binding protein (Vaccinia virus (strain Copenhagen) (VACV)).